We begin with the raw amino-acid sequence, 86 residues long: Exodeoxyribonuclease 7 small subunit (86 aa).

It belongs to the XseB family. As to quaternary structure, heterooligomer composed of large and small subunits.

It is found in the cytoplasm. The enzyme catalyses Exonucleolytic cleavage in either 5'- to 3'- or 3'- to 5'-direction to yield nucleoside 5'-phosphates.. In terms of biological role, bidirectionally degrades single-stranded DNA into large acid-insoluble oligonucleotides, which are then degraded further into small acid-soluble oligonucleotides. The protein is Exodeoxyribonuclease 7 small subunit of Xanthomonas oryzae pv. oryzae (strain MAFF 311018).